The chain runs to 179 residues: MIDNHYVQSSAKALSQIAFEEKKEKLFLNQLFIIKNIFSYNPEVVEYLASGSIKLENKKKFIEEIFDLIEPLILNFLLMAVEDNKIKYLDNIFLKAILTINKKLNIENGIIYTTLKLSDKKLLEIEKKLSVFLKKEVKLLNLIDKELISGYEIQVGDFKQRNNVASWIDQMALSIKKGD.

The protein belongs to the ATPase delta chain family. F-type ATPases have 2 components, F(1) - the catalytic core - and F(0) - the membrane proton channel. F(1) has five subunits: alpha(3), beta(3), gamma(1), delta(1), epsilon(1). F(0) has three main subunits: a(1), b(2) and c(10-14). The alpha and beta chains form an alternating ring which encloses part of the gamma chain. F(1) is attached to F(0) by a central stalk formed by the gamma and epsilon chains, while a peripheral stalk is formed by the delta and b chains.

It localises to the cell membrane. In terms of biological role, f(1)F(0) ATP synthase produces ATP from ADP in the presence of a proton or sodium gradient. F-type ATPases consist of two structural domains, F(1) containing the extramembraneous catalytic core and F(0) containing the membrane proton channel, linked together by a central stalk and a peripheral stalk. During catalysis, ATP synthesis in the catalytic domain of F(1) is coupled via a rotary mechanism of the central stalk subunits to proton translocation. This protein is part of the stalk that links CF(0) to CF(1). It either transmits conformational changes from CF(0) to CF(1) or is implicated in proton conduction. This chain is ATP synthase subunit delta, found in Mycoplasmopsis pulmonis (strain UAB CTIP) (Mycoplasma pulmonis).